The following is a 130-amino-acid chain: Small ribosomal subunit protein uS4 (130 aa).

Lys64 carries the post-translational modification N6-acetyllysine. Lys91 is covalently cross-linked (Glycyl lysine isopeptide (Lys-Gly) (interchain with G-Cter in SUMO2)). Residues 106–130 (RRLQTQVFKLGLAXSIHHXRVLIRQ) enclose the S4 RNA-binding domain. Lys114 carries the N6-acetyllysine modification.

The protein belongs to the universal ribosomal protein uS4 family. In terms of assembly, component of the small ribosomal subunit. Identified in a IGF2BP1-dependent mRNP granule complex containing untranslated mRNAs. Part of the small subunit (SSU) processome, composed of more than 70 proteins and the RNA chaperone small nucleolar RNA (snoRNA) U3.

Its subcellular location is the cytoplasm. It is found in the nucleus. The protein localises to the nucleolus. In terms of biological role, component of the small ribosomal subunit. The ribosome is a large ribonucleoprotein complex responsible for the synthesis of proteins in the cell. Part of the small subunit (SSU) processome, first precursor of the small eukaryotic ribosomal subunit. During the assembly of the SSU processome in the nucleolus, many ribosome biogenesis factors, an RNA chaperone and ribosomal proteins associate with the nascent pre-rRNA and work in concert to generate RNA folding, modifications, rearrangements and cleavage as well as targeted degradation of pre-ribosomal RNA by the RNA exosome. This is Small ribosomal subunit protein uS4 (RPS9) from Sus scrofa (Pig).